A 222-amino-acid chain; its full sequence is MSQTKMLKVRVTLFCILAGIVLAMTAVVTDHWAVLSPHMEHHNTTCEAAHFGLWRICTKRIPMDDSKTCGPITLPGEKNCSYFRHFNPGESSEIFEFTTQKEYSISAAAIAIFSLGFIILGSLCVLLSLGKKRDYLLRPASMFYAFAGLCILVSVEVMRQSVKRMIDSEDTVWIEYYYSWSFACACAAFILLFLGGLALLLFSLPRMPRNPWESCMDAEPEH.

The Cytoplasmic portion of the chain corresponds to 1–10 (MSQTKMLKVR). The chain crosses the membrane as a helical span at residues 11-29 (VTLFCILAGIVLAMTAVVT). The Extracellular portion of the chain corresponds to 30–108 (DHWAVLSPHM…TQKEYSISAA (79 aa)). 2 N-linked (GlcNAc...) asparagine glycosylation sites follow: Asn-43 and Asn-79. Cys-57 and Cys-80 form a disulfide bridge. Residues 109–129 (AIAIFSLGFIILGSLCVLLSL) traverse the membrane as a helical segment. Topologically, residues 130–134 (GKKRD) are cytoplasmic. Residues 135–155 (YLLRPASMFYAFAGLCILVSV) traverse the membrane as a helical segment. Topologically, residues 156 to 179 (EVMRQSVKRMIDSEDTVWIEYYYS) are extracellular. A helical membrane pass occupies residues 180 to 204 (WSFACACAAFILLFLGGLALLLFSL). At 205–222 (PRMPRNPWESCMDAEPEH) the chain is on the cytoplasmic side.

It belongs to the PMP-22/EMP/MP20 family. CACNG subfamily. Component of a calcium channel complex consisting of a pore-forming alpha subunit (CACNA1S) and the ancillary subunits CACNB1 or CACNB2, CACNG1 and CACNA2D1. The channel complex contains alpha, beta, gamma and delta subunits in a 1:1:1:1 ratio, i.e. it contains either CACNB1 or CACNB2. Post-translationally, N-glycosylated. As to expression, skeletal muscle.

It is found in the cell membrane. The protein resides in the sarcolemma. Its function is as follows. Regulatory subunit of the voltage-gated calcium channel that gives rise to L-type calcium currents in skeletal muscle. Regulates channel inactivation kinetics. This Homo sapiens (Human) protein is Voltage-dependent calcium channel gamma-1 subunit (CACNG1).